The chain runs to 821 residues: MPTRVCCCCSALRPRYKRLVDNIFPEDPKDGLVKTDMEKLTFYAVSAPEKLDRIGSYLAERLSRDVVRHRSGYVLIAMEALDQLLMACHSQSIKPFVESFLHMVAKLLESGEPKLQVLGTNSFVKFANIEEDTPSYHRRYDFFVSRFSAMCHSCHSDPEIRTEIRIAGIRGIQGVVRKTVNDELRATIWEPQHMDKIVPSLLFNMQKIEEVDSRIGPPSSPSATDKEENPAVLAENCFRELLGRATFGNMNNAVRPVFAHLDHHKLWDPNEFAVHCFKIIMYSIQAQYSHHVIQEILGHLDARKKDAPRVRAGIIQVLLEAVAIAAKGSIGPTVLEVFNTLLKHLRLSVEFEANDLQGGSVGSVNLNTSSKDNDEKIVQNAIIQTIGFFGSNLPDYQRSEIMMFIMGKVPVFGTSTHTLDISQLGDLGTRRIQIMLLRSLLMVTSGYKAKTIVTALPGSFLDPLLSPSLMEDYELRQLVLEVMHNLMDRHDNRAKLRGIRIIPDVADLKIKREKICRQDTSFMKKNGQQLYRHIYLGCKEEDNVQKNYELLYTSLALITIELANEEVVIDLIRLAIALQDSAIINEDNLPMFHRCGIMALVAAYLNFVSQMIAVPAFCQHVSKVIEIRTMEAPYFLPEHIFRDKCMLPKSLEKHEKDLYFLTNKIAESLGGSGYSVERLSVPYVPQVTDEDRLSRRKSIVDTVSIQVDILSNNVPSDDVVSNTEEITFEALKKAIDTSGMEEQEKEKRRLVIEKFQKAPFEEIAAQCESKANLLHDRLAQILELTIRPPPSPSGTLTITSGHAQYQSVPVYEMKFPDLCVY.

S360, S363, S422, and S694 each carry phosphoserine.

This sequence belongs to the EFR3 family. Component of a phosphatidylinositol 4-kinase (PI4K) complex, composed of PI4KA, EFR3 (EFR3A or EFR3B), TTC7 (TTC7A or TTC7B) and HYCC (HYCC1 or HYCC2). In terms of processing, palmitoylated at its N-terminus, anchoring the protein to the plasma membrane.

The protein localises to the cell membrane. It is found in the cytoplasm. It localises to the cytosol. Functionally, component of a complex required to localize phosphatidylinositol 4-kinase (PI4K) to the plasma membrane. The complex acts as a regulator of phosphatidylinositol 4-phosphate (PtdIns(4)P) synthesis. In the complex, EFR3A probably acts as the membrane-anchoring component. Also involved in responsiveness to G-protein-coupled receptors; it is however unclear whether this role is direct or indirect. The protein is Protein EFR3 homolog A of Homo sapiens (Human).